The chain runs to 178 residues: Large ribosomal subunit protein uL6 (178 aa).

The protein belongs to the universal ribosomal protein uL6 family. In terms of assembly, part of the 50S ribosomal subunit.

Functionally, this protein binds to the 23S rRNA, and is important in its secondary structure. It is located near the subunit interface in the base of the L7/L12 stalk, and near the tRNA binding site of the peptidyltransferase center. This is Large ribosomal subunit protein uL6 from Streptococcus sanguinis (strain SK36).